A 129-amino-acid chain; its full sequence is Protein Turandot C (129 aa).

The signal sequence occupies residues 1–21 (MNASISLLCFALLLISPFCLG).

It belongs to the Turandot family.

Its subcellular location is the secreted. Its function is as follows. A humoral factor that may play a role in stress tolerance. This Drosophila sechellia (Fruit fly) protein is Protein Turandot C.